We begin with the raw amino-acid sequence, 435 residues long: UDP-N-acetylmuramate--L-alanine ligase (435 aa).

Glycine 108–serine 114 serves as a coordination point for ATP.

Belongs to the MurCDEF family.

Its subcellular location is the cytoplasm. It catalyses the reaction UDP-N-acetyl-alpha-D-muramate + L-alanine + ATP = UDP-N-acetyl-alpha-D-muramoyl-L-alanine + ADP + phosphate + H(+). Its pathway is cell wall biogenesis; peptidoglycan biosynthesis. In terms of biological role, cell wall formation. This chain is UDP-N-acetylmuramate--L-alanine ligase, found in Exiguobacterium sp. (strain ATCC BAA-1283 / AT1b).